A 115-amino-acid polypeptide reads, in one-letter code: Large ribosomal subunit protein bL20 (115 aa).

It belongs to the bacterial ribosomal protein bL20 family.

Its function is as follows. Binds directly to 23S ribosomal RNA and is necessary for the in vitro assembly process of the 50S ribosomal subunit. It is not involved in the protein synthesizing functions of that subunit. In Cytophaga hutchinsonii (strain ATCC 33406 / DSM 1761 / CIP 103989 / NBRC 15051 / NCIMB 9469 / D465), this protein is Large ribosomal subunit protein bL20.